The chain runs to 214 residues: 3-demethoxyubiquinol 3-hydroxylase (214 aa).

Positions 63, 93, 96, 145, 177, and 180 each coordinate Fe cation.

It belongs to the COQ7 family. Requires Fe cation as cofactor.

It localises to the cell membrane. It catalyses the reaction a 5-methoxy-2-methyl-3-(all-trans-polyprenyl)benzene-1,4-diol + AH2 + O2 = a 3-demethylubiquinol + A + H2O. It functions in the pathway cofactor biosynthesis; ubiquinone biosynthesis. Its function is as follows. Catalyzes the hydroxylation of 2-nonaprenyl-3-methyl-6-methoxy-1,4-benzoquinol during ubiquinone biosynthesis. The chain is 3-demethoxyubiquinol 3-hydroxylase from Psychrobacter arcticus (strain DSM 17307 / VKM B-2377 / 273-4).